The chain runs to 324 residues: Hydroxyacylglutathione hydrolase 2, mitochondrial (324 aa).

The transit peptide at 1 to 64 (MQTISKASSA…KSIRVSKFCS (64 aa)) directs the protein to the mitochondrion. The Zn(2+) site is built by histidine 124 and histidine 126. Residues aspartate 128 and histidine 129 each coordinate Fe cation. Positions 182 and 201 each coordinate Zn(2+). 2 residues coordinate Fe cation: aspartate 201 and histidine 239.

The protein belongs to the metallo-beta-lactamase superfamily. Glyoxalase II family. As to quaternary structure, monomer. It depends on Fe(3+) as a cofactor. The cofactor is Fe(2+). Zn(2+) serves as cofactor.

The protein resides in the mitochondrion. It catalyses the reaction an S-(2-hydroxyacyl)glutathione + H2O = a 2-hydroxy carboxylate + glutathione + H(+). The protein operates within secondary metabolite metabolism; methylglyoxal degradation; (R)-lactate from methylglyoxal: step 2/2. Thiolesterase that catalyzes the hydrolysis of S-D-lactoyl-glutathione to form glutathione and D-lactic acid. The polypeptide is Hydroxyacylglutathione hydrolase 2, mitochondrial (Arabidopsis thaliana (Mouse-ear cress)).